The sequence spans 345 residues: Methylthioribose-1-phosphate isomerase 2 (345 aa).

Substrate-binding positions include 47–49 (RGA), R88, and Q194. D235 functions as the Proton donor in the catalytic mechanism. 245–246 (NK) lines the substrate pocket.

It belongs to the eIF-2B alpha/beta/delta subunits family. MtnA subfamily.

It carries out the reaction 5-(methylsulfanyl)-alpha-D-ribose 1-phosphate = 5-(methylsulfanyl)-D-ribulose 1-phosphate. The protein operates within amino-acid biosynthesis; L-methionine biosynthesis via salvage pathway; L-methionine from S-methyl-5-thio-alpha-D-ribose 1-phosphate: step 1/6. In terms of biological role, catalyzes the interconversion of methylthioribose-1-phosphate (MTR-1-P) into methylthioribulose-1-phosphate (MTRu-1-P). In Pseudothermotoga lettingae (strain ATCC BAA-301 / DSM 14385 / NBRC 107922 / TMO) (Thermotoga lettingae), this protein is Methylthioribose-1-phosphate isomerase 2.